The primary structure comprises 237 residues: Phosphoribosylaminoimidazole-succinocarboxamide synthase (237 aa).

Belongs to the SAICAR synthetase family.

The catalysed reaction is 5-amino-1-(5-phospho-D-ribosyl)imidazole-4-carboxylate + L-aspartate + ATP = (2S)-2-[5-amino-1-(5-phospho-beta-D-ribosyl)imidazole-4-carboxamido]succinate + ADP + phosphate + 2 H(+). Its pathway is purine metabolism; IMP biosynthesis via de novo pathway; 5-amino-1-(5-phospho-D-ribosyl)imidazole-4-carboxamide from 5-amino-1-(5-phospho-D-ribosyl)imidazole-4-carboxylate: step 1/2. The chain is Phosphoribosylaminoimidazole-succinocarboxamide synthase from Baumannia cicadellinicola subsp. Homalodisca coagulata.